The sequence spans 61 residues: Metallothionein-1 (61 aa).

Residue methionine 1 is modified to N-acetylmethionine. Positions 1–29 (MDPNCSCSTGSTCTCSSSCGCKDCKCTSC) are beta. Residues cysteine 5, cysteine 7, cysteine 13, cysteine 15, cysteine 19, cysteine 21, cysteine 24, cysteine 26, cysteine 29, cysteine 33, cysteine 34, cysteine 36, cysteine 37, cysteine 41, cysteine 44, cysteine 48, cysteine 50, cysteine 57, cysteine 59, and cysteine 60 each coordinate a divalent metal cation. Residues 30-61 (KKSCCSCCPVGCSKCAQGCVCKGASDKCTCCA) form an alpha region.

The protein belongs to the metallothionein superfamily. Type 1 family.

In terms of biological role, metallothioneins have a high content of cysteine residues that bind various heavy metals; these proteins are transcriptionally regulated by both heavy metals and glucocorticoids. The protein is Metallothionein-1 (MT1) of Cricetulus griseus (Chinese hamster).